The following is a 67-amino-acid chain: Protein DsrB (67 aa).

This sequence belongs to the DsrB family.

This chain is Protein DsrB, found in Pectobacterium carotovorum subsp. carotovorum (strain PC1).